A 660-amino-acid polypeptide reads, in one-letter code: UPF0603 protein MT2410 (660 aa).

An N-terminal signal peptide occupies residues 1 to 26 (MRLVRLLGMVLTILAAGLLLGPPAGA). A helical transmembrane segment spans residues 162-182 (VVLLVTVGIIVIVVAVLLVVM). A coiled-coil region spans residues 488 to 567 (DQLTKVDADL…LEAAHDRKSS (80 aa)). The helical transmembrane segment at 605 to 625 (GGNNAGAILGGIIIGDLLSGG) threads the bilayer. Residues 638–660 (FGGSSNAPGSSPDGGFLGGGGRF) are disordered.

It belongs to the UPF0603 family.

It is found in the cell membrane. Functionally, may play a role in septum formation. The chain is UPF0603 protein MT2410 from Mycobacterium tuberculosis (strain CDC 1551 / Oshkosh).